Here is a 160-residue protein sequence, read N- to C-terminus: Serine-protein kinase RsbW (160 aa).

This sequence belongs to the anti-sigma-factor family.

The enzyme catalyses L-seryl-[protein] + ATP = O-phospho-L-seryl-[protein] + ADP + H(+). The catalysed reaction is L-threonyl-[protein] + ATP = O-phospho-L-threonyl-[protein] + ADP + H(+). Negative regulator of sigma-B activity. Phosphorylates and inactivates its specific antagonist protein, RsbV. Upon phosphorylation of RsbV, RsbW is released and binds to sigma-B, thereby blocking its ability to form an RNA polymerase holoenzyme (E-sigma-B). This chain is Serine-protein kinase RsbW, found in Bacillus cereus (strain ZK / E33L).